Consider the following 343-residue polypeptide: C-X-C chemokine receptor type 6 (343 aa).

Topologically, residues 1-33 (MAEYDHYEDDEFFNSFNDSSQKEHQDFLQFSKV) are extracellular. N-linked (GlcNAc...) asparagine glycosylation occurs at Asn17. A helical transmembrane segment spans residues 34 to 60 (FLPCMYLVVFVCGLVGNSLVLVISIFY). At 61–69 (HKLQSLTDV) the chain is on the cytoplasmic side. Residues 70–90 (FLVNLPLADLVFVCTLPFWAY) traverse the membrane as a helical segment. The Extracellular portion of the chain corresponds to 91 to 104 (AGIHEWIFGQVMCK). The cysteines at positions 103 and 181 are disulfide-linked. The helical transmembrane segment at 105–126 (TLLGVYTINFYTSMLILTCITV) threads the bilayer. Residues 127–144 (DRFIVVVKATKAYNQQAK) lie on the Cytoplasmic side of the membrane. Residues 145 to 165 (RMTWGKVICLLIWVISLLVSL) form a helical membrane-spanning segment. Over 166–188 (PQIIYGNVFNLDKLICRYHDEEI) the chain is Extracellular. Residues 189–216 (STVVLATQMTLGFFLPLLTMIVCYSVII) form a helical membrane-spanning segment. Over 217-232 (KTLLHAGGFQKHRSLK) the chain is Cytoplasmic. A helical membrane pass occupies residues 233 to 260 (IIFLVMAVFLLTQTPFNLVKLIRSTHWE). At 261-276 (YYAMTSFHYTIIVTEA) the chain is on the extracellular side. The helical transmembrane segment at 277–294 (IAYLRACLNPVLYAFVSL) threads the bilayer. Over 295–343 (KFRKNFWKLVKDIGCLPYLGVSHQWKSSEDNSKTFSASHNVEATSMFQL) the chain is Cytoplasmic.

The protein belongs to the G-protein coupled receptor 1 family.

The protein localises to the cell membrane. In terms of biological role, receptor for the C-X-C chemokine CXCL16. Used as a coreceptor by SIVs and by strains of HIV-2 and m-tropic HIV-1. The protein is C-X-C chemokine receptor type 6 (CXCR6) of Cercocebus atys (Sooty mangabey).